Here is a 407-residue protein sequence, read N- to C-terminus: S-adenosylmethionine synthase (407 aa).

His-15 serves as a coordination point for ATP. Mg(2+) is bound at residue Asp-17. Glu-43 is a binding site for K(+). L-methionine is bound by residues Glu-56 and Gln-99. A flexible loop region spans residues 99 to 109 (QSPDIARGVDT). The disordered stretch occupies residues 112–131 (ERRGGGTAPGGPGDELDRQG). ATP-binding positions include 179–181 (DGK), 252–253 (RF), Asp-261, 267–268 (RK), Ala-284, and Lys-288. Residue Asp-261 coordinates L-methionine. Residue Lys-292 participates in L-methionine binding.

Belongs to the AdoMet synthase family. Homotetramer; dimer of dimers. Mg(2+) serves as cofactor. The cofactor is K(+).

The protein resides in the cytoplasm. The enzyme catalyses L-methionine + ATP + H2O = S-adenosyl-L-methionine + phosphate + diphosphate. Its pathway is amino-acid biosynthesis; S-adenosyl-L-methionine biosynthesis; S-adenosyl-L-methionine from L-methionine: step 1/1. In terms of biological role, catalyzes the formation of S-adenosylmethionine (AdoMet) from methionine and ATP. The overall synthetic reaction is composed of two sequential steps, AdoMet formation and the subsequent tripolyphosphate hydrolysis which occurs prior to release of AdoMet from the enzyme. The chain is S-adenosylmethionine synthase from Streptomyces fradiae (Streptomyces roseoflavus).